Here is an 86-residue protein sequence, read N- to C-terminus: Anti-adapter protein IraP (86 aa).

A coiled-coil region spans residues 1 to 36 (MKNLIAELLVKLAEKEEESKELVAQVEALEIVVTAL).

The protein belongs to the IraP family. In terms of assembly, interacts with RssB.

The protein resides in the cytoplasm. Inhibits RpoS proteolysis by regulating RssB activity, thereby increasing the stability of the sigma stress factor RpoS especially during phosphate starvation, but also in stationary phase and during nitrogen starvation. Its effect on RpoS stability is due to its interaction with RssB, which probably blocks the interaction of RssB with RpoS, and the consequent delivery of the RssB-RpoS complex to the ClpXP protein degradation pathway. This chain is Anti-adapter protein IraP, found in Cronobacter sakazakii (strain ATCC BAA-894) (Enterobacter sakazakii).